Reading from the N-terminus, the 331-residue chain is Holliday junction branch migration complex subunit RuvB (331 aa).

The large ATPase domain (RuvB-L) stretch occupies residues 1–182 (MDDRMVDQAL…FGVHLRLEYY (182 aa)). ATP-binding positions include leucine 21, arginine 22, glycine 63, lysine 66, threonine 67, threonine 68, 129–131 (EDF), arginine 172, tyrosine 182, and arginine 219. Threonine 67 is a binding site for Mg(2+). Positions 183–253 (NENDLKEIII…TTKQALQLLQ (71 aa)) are small ATPAse domain (RuvB-S). A head domain (RuvB-H) region spans residues 256–331 (AEGLDYIDHK…AYEHFKNFNK (76 aa)). Residues arginine 292, arginine 311, and arginine 316 each coordinate DNA.

It belongs to the RuvB family. In terms of assembly, homohexamer. Forms an RuvA(8)-RuvB(12)-Holliday junction (HJ) complex. HJ DNA is sandwiched between 2 RuvA tetramers; dsDNA enters through RuvA and exits via RuvB. An RuvB hexamer assembles on each DNA strand where it exits the tetramer. Each RuvB hexamer is contacted by two RuvA subunits (via domain III) on 2 adjacent RuvB subunits; this complex drives branch migration. In the full resolvosome a probable DNA-RuvA(4)-RuvB(12)-RuvC(2) complex forms which resolves the HJ.

The protein localises to the cytoplasm. The catalysed reaction is ATP + H2O = ADP + phosphate + H(+). The RuvA-RuvB-RuvC complex processes Holliday junction (HJ) DNA during genetic recombination and DNA repair, while the RuvA-RuvB complex plays an important role in the rescue of blocked DNA replication forks via replication fork reversal (RFR). RuvA specifically binds to HJ cruciform DNA, conferring on it an open structure. The RuvB hexamer acts as an ATP-dependent pump, pulling dsDNA into and through the RuvAB complex. RuvB forms 2 homohexamers on either side of HJ DNA bound by 1 or 2 RuvA tetramers; 4 subunits per hexamer contact DNA at a time. Coordinated motions by a converter formed by DNA-disengaged RuvB subunits stimulates ATP hydrolysis and nucleotide exchange. Immobilization of the converter enables RuvB to convert the ATP-contained energy into a lever motion, pulling 2 nucleotides of DNA out of the RuvA tetramer per ATP hydrolyzed, thus driving DNA branch migration. The RuvB motors rotate together with the DNA substrate, which together with the progressing nucleotide cycle form the mechanistic basis for DNA recombination by continuous HJ branch migration. Branch migration allows RuvC to scan DNA until it finds its consensus sequence, where it cleaves and resolves cruciform DNA. The polypeptide is Holliday junction branch migration complex subunit RuvB (Staphylococcus haemolyticus (strain JCSC1435)).